A 1654-amino-acid chain; its full sequence is Cortactin-binding protein 2 (1654 aa).

Residues 1–31 form a disordered region; the sequence is MATDGASCEPDFSRSPEDAAGATAEPAKKEF. Residues 119-276 are a coiled coil; sequence RKMQERMSTQ…EQLKRGSDSK (158 aa). Disordered regions lie at residues 361 to 432, 455 to 480, and 495 to 596; these read SHGD…LHSP, GNAN…PTSR, and QALS…PQGN. The segment covering 368-379 has biased composition (low complexity); sequence SSVPAAPTPSAS. 2 stretches are compositionally biased toward polar residues: residues 384-395 and 411-422; these read NGPSTGSAPDPT and QTPGTAAQSYSQ. R499 carries the post-translational modification Asymmetric dimethylarginine. Over residues 518 to 531 the composition is skewed to polar residues; that stretch reads DVSSHTPVSRTSLK. ANK repeat units lie at residues 710–740, 744–773, 777–806, 810–839, 843–872, and 913–943; these read GRPT…DINY, DGHS…QVNA, NGFT…NINH, GGQT…DRSV, DGWT…PIPG, and EGWT…EPER. The interval 1454–1478 is disordered; that stretch reads GAWRKVSTSPRKKSGHFSSPVWNKP. S1523 is modified (phosphoserine). The segment at 1556–1654 is disordered; the sequence is RRLHSSGNNP…KEEIWNLRKK (99 aa). Positions 1581 to 1598 are enriched in polar residues; the sequence is KEVSPLSSHQTTECSNNK. Over residues 1623–1637 the composition is skewed to low complexity; sequence SQNTKRSSSSSNTRQ. Positions 1644 to 1654 are enriched in basic and acidic residues; sequence SKEEIWNLRKK.

In terms of assembly, interacts with CTTN/cortactin SH3 domain. Interacts with STRN, STRN4/zinedin and MOB4/phocein; this interactions mediate the association with the STRIPAK core complex and may regulate dendritic spine distribution of the STRIPAK complex in hippocampal neurons. Activation of glutamate receptors weakens the interaction with STRN and STRN4.

It is found in the cytoplasm. The protein resides in the cell cortex. It localises to the cell projection. Its subcellular location is the dendritic spine. Its function is as follows. Regulates the dendritic spine distribution of CTTN/cortactin in hippocampal neurons, and thus controls dendritic spinogenesis and dendritic spine maintenance. Associates with the striatin-interacting phosphatase and kinase (STRIPAK) core complex to regulate dendritic spine distribution of the STRIPAK complex in hippocampal neurons. The sequence is that of Cortactin-binding protein 2 (CTTNBP2) from Atelerix albiventris (Middle-African hedgehog).